The sequence spans 173 residues: Small ribosomal subunit protein uS5 (173 aa).

An S5 DRBM domain is found at Trp-17–Val-80.

It belongs to the universal ribosomal protein uS5 family. In terms of assembly, part of the 30S ribosomal subunit. Contacts proteins S4 and S8.

In terms of biological role, with S4 and S12 plays an important role in translational accuracy. Located at the back of the 30S subunit body where it stabilizes the conformation of the head with respect to the body. The sequence is that of Small ribosomal subunit protein uS5 from Rippkaea orientalis (strain PCC 8801 / RF-1) (Cyanothece sp. (strain PCC 8801)).